A 366-amino-acid polypeptide reads, in one-letter code: Phospho-N-acetylmuramoyl-pentapeptide-transferase (366 aa).

The next 10 helical transmembrane spans lie at 27-47 (AALF…IASL), 71-91 (TPTM…LLWA), 93-113 (LSSI…AIGF), 138-158 (FVIA…AGAA), 174-194 (LMLN…VGAG), 205-225 (GLAI…AYLA), 245-265 (LAVI…FNAP), 268-288 (AIFM…TVAV), 297-317 (IIIG…VFWF), and 343-363 (QVVI…LSTL).

It belongs to the glycosyltransferase 4 family. MraY subfamily. The cofactor is Mg(2+).

The protein localises to the cell inner membrane. The catalysed reaction is UDP-N-acetyl-alpha-D-muramoyl-L-alanyl-gamma-D-glutamyl-meso-2,6-diaminopimeloyl-D-alanyl-D-alanine + di-trans,octa-cis-undecaprenyl phosphate = di-trans,octa-cis-undecaprenyl diphospho-N-acetyl-alpha-D-muramoyl-L-alanyl-D-glutamyl-meso-2,6-diaminopimeloyl-D-alanyl-D-alanine + UMP. The protein operates within cell wall biogenesis; peptidoglycan biosynthesis. In terms of biological role, catalyzes the initial step of the lipid cycle reactions in the biosynthesis of the cell wall peptidoglycan: transfers peptidoglycan precursor phospho-MurNAc-pentapeptide from UDP-MurNAc-pentapeptide onto the lipid carrier undecaprenyl phosphate, yielding undecaprenyl-pyrophosphoryl-MurNAc-pentapeptide, known as lipid I. The sequence is that of Phospho-N-acetylmuramoyl-pentapeptide-transferase from Rhizobium meliloti (strain 1021) (Ensifer meliloti).